A 231-amino-acid polypeptide reads, in one-letter code: Cytidylate kinase (231 aa).

Position 18-26 (Gly-18–Ser-26) interacts with ATP.

Belongs to the cytidylate kinase family. Type 1 subfamily.

It is found in the cytoplasm. It catalyses the reaction CMP + ATP = CDP + ADP. It carries out the reaction dCMP + ATP = dCDP + ADP. This is Cytidylate kinase from Streptomyces avermitilis (strain ATCC 31267 / DSM 46492 / JCM 5070 / NBRC 14893 / NCIMB 12804 / NRRL 8165 / MA-4680).